A 372-amino-acid polypeptide reads, in one-letter code: Putative F-box/kelch-repeat protein At3g22730 (372 aa).

The region spanning 1 to 50 (MMMSDLSLDLVEEILSRVPATSLKRLRSTCKLWNALFKNPGFTKKQFLKA) is the F-box domain. 3 Kelch repeats span residues 155–204 (ILRC…SFKG), 245–293 (ALSV…PIRG), and 324–372 (KVYI…IIKE).

This chain is Putative F-box/kelch-repeat protein At3g22730, found in Arabidopsis thaliana (Mouse-ear cress).